We begin with the raw amino-acid sequence, 938 residues long: Auxilin (938 aa).

A disordered region spans residues 19 to 41; sequence AAAGENRMKDSENKGASSPDMEP. 3 consecutive repeat copies span residues 61–64, 65–68, and 69–72. A 3 X 4 AA approximate tandem repeats region spans residues 61-72; the sequence is NLKDNLKDTLKD. The region spanning 80 to 247 is the Phosphatase tensin-type domain; the sequence is SVSSYTKGDL…GYMCDLLADK (168 aa). The residue at position 137 (Ser137) is a Phosphoserine. Catalysis depends on Cys189, which acts as the Phosphocysteine intermediate. A C2 tensin-type domain is found at 253–391; it reads FKPLTIKAIT…FQVTLDIEVQ (139 aa). An SH3-binding motif is present at residues 434 to 442; it reads PADLPPDHP. The disordered stretch occupies residues 467–801; the sequence is EEDHAALVNQ…GKGSTNLEGK (335 aa). Ser478 and Ser481 each carry phosphoserine. Positions 531 to 548 are enriched in polar residues; the sequence is DVSTNFSSLAAPPSNSEL. The span at 559–569 shows a compositional bias: low complexity; sequence TGPAQAGQAGV. 2 stretches are compositionally biased toward polar residues: residues 579-596 and 624-654; these read VSAQ…SASP and FLNT…TPAV. At Ser595 the chain carries Phosphoserine. A compositionally biased stretch (low complexity) spans 679 to 694; sequence SAATSPTGSSHGTPTH. Over residues 754–781 the composition is skewed to polar residues; the sequence is NWQQTQSKPQSSMPHSSPQNRPNYNVSF. In terms of domain architecture, J spans 874–938; that stretch reads TKWKPVGMAD…FENQGQKPLY (65 aa).

As to quaternary structure, forms a complex composed of HSPA8, CLTC and DNAJC6. Interacts with HSPA8/HSC70 in an ATP-dependent manner; this interaction stimulates the HSPA8's ATPase activity. Interacts with CLTC; this interaction produces a local change in heavy-chain contacts, creating a detectable global distortion of the clathrin coat. Interacts with AP2A2. Interacts with DNM1(GTP-bound form); this interaction allows clathrin-coated vesicle (CCV) formation at the plasma membrane. In terms of processing, the N-terminus is blocked. Phosphorylation at Ser-595 modulates its ability to bind CLTC and therefore the synaptic vesicle endocytosis (SVE).

The protein resides in the cytoplasmic vesicle. Its subcellular location is the clathrin-coated vesicle. Functionally, may act as a protein phosphatase and/or a lipid phosphatase. Co-chaperone that recruits HSPA8/HSC70 to clathrin-coated vesicles (CCVs) and promotes the ATP-dependent dissociation of clathrin from CCVs and participates in clathrin-mediated endocytosis of synaptic vesicles and their recycling and also in intracellular trafficking. Firstly, binds tightly to the clathrin cages, at a ratio of one DNAJC6 per clathrin triskelion. The HSPA8:ATP complex then binds to the clathrin-auxilin cage, initially at a ratio of one HSPA8 per triskelion leading to ATP hydrolysis stimulation and causing a conformational change in the HSPA8. This cycle is repeated three times to drive to a complex containing the clathrin-auxilin cage associated to three HSPA8:ADP complex. The ATP hydrolysis of the third HSPA8:ATP complex leads to a concerted dismantling of the cage into component triskelia. Then, dissociates from the released triskelia and be recycled to initiate another cycle of HSPA8's recruitment. Also acts during the early steps of clathrin-coated vesicle (CCV) formation through its interaction with the GTP bound form of DNM1. This is Auxilin from Mus musculus (Mouse).